The sequence spans 224 residues: Flagellar L-ring protein (224 aa).

A signal peptide spans methionine 1–alanine 15. A lipid anchor (N-palmitoyl cysteine) is attached at cysteine 16. A lipid anchor (S-diacylglycerol cysteine) is attached at cysteine 16.

The protein belongs to the FlgH family. As to quaternary structure, the basal body constitutes a major portion of the flagellar organelle and consists of four rings (L,P,S, and M) mounted on a central rod.

Its subcellular location is the cell outer membrane. The protein resides in the bacterial flagellum basal body. Functionally, assembles around the rod to form the L-ring and probably protects the motor/basal body from shearing forces during rotation. The protein is Flagellar L-ring protein of Shewanella sp. (strain MR-4).